Consider the following 204-residue polypeptide: Protein GrpE (204 aa).

A disordered region spans residues methionine 1–lysine 52. Composition is skewed to basic and acidic residues over residues proline 7–glutamate 22 and methionine 38–lysine 52.

The protein belongs to the GrpE family. As to quaternary structure, homodimer.

It localises to the cytoplasm. Participates actively in the response to hyperosmotic and heat shock by preventing the aggregation of stress-denatured proteins, in association with DnaK and GrpE. It is the nucleotide exchange factor for DnaK and may function as a thermosensor. Unfolded proteins bind initially to DnaJ; upon interaction with the DnaJ-bound protein, DnaK hydrolyzes its bound ATP, resulting in the formation of a stable complex. GrpE releases ADP from DnaK; ATP binding to DnaK triggers the release of the substrate protein, thus completing the reaction cycle. Several rounds of ATP-dependent interactions between DnaJ, DnaK and GrpE are required for fully efficient folding. This Coxiella burnetii (strain Dugway 5J108-111) protein is Protein GrpE.